Here is a 438-residue protein sequence, read N- to C-terminus: Serine hydroxymethyltransferase (438 aa).

(6S)-5,6,7,8-tetrahydrofolate-binding positions include Leu133 and 137–139 (GHL). The residue at position 242 (Lys242) is an N6-(pyridoxal phosphate)lysine.

Belongs to the SHMT family. Homodimer. Pyridoxal 5'-phosphate is required as a cofactor.

The protein resides in the cytoplasm. The catalysed reaction is (6R)-5,10-methylene-5,6,7,8-tetrahydrofolate + glycine + H2O = (6S)-5,6,7,8-tetrahydrofolate + L-serine. The protein operates within one-carbon metabolism; tetrahydrofolate interconversion. It participates in amino-acid biosynthesis; glycine biosynthesis; glycine from L-serine: step 1/1. Functionally, catalyzes the reversible interconversion of serine and glycine with tetrahydrofolate (THF) serving as the one-carbon carrier. This reaction serves as the major source of one-carbon groups required for the biosynthesis of purines, thymidylate, methionine, and other important biomolecules. Also exhibits THF-independent aldolase activity toward beta-hydroxyamino acids, producing glycine and aldehydes, via a retro-aldol mechanism. This Brucella suis (strain ATCC 23445 / NCTC 10510) protein is Serine hydroxymethyltransferase.